The sequence spans 254 residues: DNA repair protein RecO (254 aa).

The protein belongs to the RecO family.

Functionally, involved in DNA repair and RecF pathway recombination. This is DNA repair protein RecO from Anaeromyxobacter dehalogenans (strain 2CP-C).